The sequence spans 352 residues: Heat-inducible transcription repressor HrcA (352 aa).

This sequence belongs to the HrcA family.

Functionally, negative regulator of class I heat shock genes (grpE-dnaK-dnaJ and groELS operons). Prevents heat-shock induction of these operons. This Chlorobium phaeobacteroides (strain BS1) protein is Heat-inducible transcription repressor HrcA.